The following is a 251-amino-acid chain: Small ribosomal subunit protein uS3 (251 aa).

A KH type-2 domain is found at 39–109 (IRNYVQARLK…EVKIDVIEVI (71 aa)). Residues 222 to 239 (LKKIKDRRGEQRSRGRDS) show a composition bias toward basic and acidic residues. Residues 222-251 (LKKIKDRRGEQRSRGRDSRNRRRRKPRQTT) form a disordered region. Residues 240-251 (RNRRRRKPRQTT) show a composition bias toward basic residues.

The protein belongs to the universal ribosomal protein uS3 family. In terms of assembly, part of the 30S ribosomal subunit. Forms a tight complex with proteins S10 and S14.

Binds the lower part of the 30S subunit head. Binds mRNA in the 70S ribosome, positioning it for translation. The protein is Small ribosomal subunit protein uS3 of Prosthecochloris aestuarii (strain DSM 271 / SK 413).